A 160-amino-acid polypeptide reads, in one-letter code: S-ribosylhomocysteine lyase (160 aa).

Residues histidine 57, histidine 61, and cysteine 127 each contribute to the Fe cation site.

It belongs to the LuxS family. As to quaternary structure, homodimer. The cofactor is Fe cation.

The enzyme catalyses S-(5-deoxy-D-ribos-5-yl)-L-homocysteine = (S)-4,5-dihydroxypentane-2,3-dione + L-homocysteine. Its function is as follows. Involved in the synthesis of autoinducer 2 (AI-2) which is secreted by bacteria and is used to communicate both the cell density and the metabolic potential of the environment. The regulation of gene expression in response to changes in cell density is called quorum sensing. Catalyzes the transformation of S-ribosylhomocysteine (RHC) to homocysteine (HC) and 4,5-dihydroxy-2,3-pentadione (DPD). The polypeptide is S-ribosylhomocysteine lyase (Streptococcus mutans serotype c (strain ATCC 700610 / UA159)).